The chain runs to 55 residues: ATP synthase F(0) complex subunit 8 (55 aa).

The helical transmembrane segment at 10–32 (FFIMLASWLTFSLIIQPKLLTFV) threads the bilayer.

It belongs to the ATPase protein 8 family. Component of the ATP synthase complex composed at least of ATP5F1A/subunit alpha, ATP5F1B/subunit beta, ATP5MC1/subunit c (homooctomer), MT-ATP6/subunit a, MT-ATP8/subunit 8, ATP5ME/subunit e, ATP5MF/subunit f, ATP5MG/subunit g, ATP5MK/subunit k, ATP5MJ/subunit j, ATP5F1C/subunit gamma, ATP5F1D/subunit delta, ATP5F1E/subunit epsilon, ATP5PF/subunit F6, ATP5PB/subunit b, ATP5PD/subunit d, ATP5PO/subunit OSCP. ATP synthase complex consists of a soluble F(1) head domain (subunits alpha(3) and beta(3)) - the catalytic core - and a membrane F(0) domain - the membrane proton channel (subunits c, a, 8, e, f, g, k and j). These two domains are linked by a central stalk (subunits gamma, delta, and epsilon) rotating inside the F1 region and a stationary peripheral stalk (subunits F6, b, d, and OSCP).

It is found in the mitochondrion membrane. In terms of biological role, subunit 8, of the mitochondrial membrane ATP synthase complex (F(1)F(0) ATP synthase or Complex V) that produces ATP from ADP in the presence of a proton gradient across the membrane which is generated by electron transport complexes of the respiratory chain. ATP synthase complex consist of a soluble F(1) head domain - the catalytic core - and a membrane F(1) domain - the membrane proton channel. These two domains are linked by a central stalk rotating inside the F(1) region and a stationary peripheral stalk. During catalysis, ATP synthesis in the catalytic domain of F(1) is coupled via a rotary mechanism of the central stalk subunits to proton translocation. In vivo, can only synthesize ATP although its ATP hydrolase activity can be activated artificially in vitro. Part of the complex F(0) domain. The chain is ATP synthase F(0) complex subunit 8 from Loxigilla noctis (Lesser Antillean bullfinch).